The primary structure comprises 548 residues: Natural resistance-associated macrophage protein 1 (548 aa).

The interval 1-38 (MSGDTGPPKQGGTRYGSISSPPSPEPQQAPPGGTYLSE) is disordered. The Cytoplasmic segment spans residues 1 to 55 (MSGDTGPPKQGGTRYGSISSPPSPEPQQAPPGGTYLSEKIPIPDTESGTFSLRKL). A helical transmembrane segment spans residues 56-73 (WAFTGPGFLMSIAFLDPG). Residues 74–82 (NIESDLQAG) are Extracellular-facing. The chain crosses the membrane as a helical span at residues 83–102 (AVAGFKLLWVLLWATVLGLL). The Cytoplasmic segment spans residues 103–139 (CQRLAARLGVVTGKDLGEVCHLYYPKVPRILLWLTIE). A helical transmembrane segment spans residues 140–160 (LAIVGSDMQEVIGTAIAFSLL). Topologically, residues 161-164 (SAGR) are extracellular. A helical transmembrane segment spans residues 165–184 (IPLWGGVLITVVDTFFFLFL). Residues 185–193 (DNYGLRKLE) are Cytoplasmic-facing. Residues 194 to 214 (AFFGFLITIMALTFGYEYVVA) form a helical membrane-spanning segment. Over 215–237 (QPAQGALLQGLFLPSCPGCGQPE) the chain is Extracellular. A helical membrane pass occupies residues 238-256 (LLQAVGIIGAIIMPHNIYL). Topologically, residues 257 to 284 (HSSLVKSREVDRSRRADIREANMYFLIE) are cytoplasmic. Residues 285–304 (ATIALSVSFLINLFVMAVFG) traverse the membrane as a helical segment. Residues 305–346 (QAFYKQTNQAAFNICADSSLHDYAPIFPRNNLTVAVDIYQGG) lie on the Extracellular side of the membrane. Asn-335 is a glycosylation site (N-linked (GlcNAc...) asparagine). The helical transmembrane segment at 347 to 366 (VILGCLFGPPALYIWAVGLL) threads the bilayer. Residues 367–397 (AAGQSSTMTGTYAGQFVMEGFLKLRWSRFAR) lie on the Cytoplasmic side of the membrane. The chain crosses the membrane as a helical span at residues 398–415 (VLLTRSCAILPTVLLAVF). Residues 416–426 (RDLRDLSGLND) are Extracellular-facing. Residues 427–447 (LLNVLQSLLLPFAVLPILTFT) traverse the membrane as a helical segment. The Cytoplasmic segment spans residues 448–463 (SMPALMQEFANGLVSK). The helical transmembrane segment at 464–485 (VITSSIMVLVCAVNLYFVISYL) threads the bilayer. The Extracellular portion of the chain corresponds to 486–493 (PSLPHPAY). A helical membrane pass occupies residues 494 to 513 (FSLVALLAAAYLGLTTYLVW). At 514–548 (TCLITQGATLLAHSSHQRFLYGLPEEDQEKGRTSG) the chain is on the cytoplasmic side.

It belongs to the NRAMP family.

The protein resides in the late endosome membrane. It localises to the lysosome membrane. It carries out the reaction Zn(2+)(in) + H(+)(out) = Zn(2+)(out) + H(+)(in). It catalyses the reaction Fe(2+)(in) + H(+)(out) = Fe(2+)(out) + H(+)(in). The enzyme catalyses Mn(2+)(in) + H(+)(out) = Mn(2+)(out) + H(+)(in). Macrophage-specific antiporter that fluxes metal ions in either direction against a proton gradient. Localized to late endosomal lysosomal membranes, delivers bivalent cations from the cytosol into these acidic compartments where they may directly affect antimicrobial activity. Involved in iron metabolism and host natural resistance to infection with intracellular parasites. Pathogen resistance involves sequestration of Fe(2+) and Mn(2+), cofactors of both prokaryotic and eukaryotic catalases and superoxide dismutases, not only to protect the macrophage against its own generation of reactive oxygen species, but to deny the cations to the pathogen for synthesis of its protective enzymes. The polypeptide is Natural resistance-associated macrophage protein 1 (SLC11A1) (Bos taurus (Bovine)).